The following is a 419-amino-acid chain: Peroxisome biogenesis factor 10 (419 aa).

The Peroxisomal matrix segment spans residues 1 to 27 (MPPSEEIKLRAVSPRPDFKANYLEFAN). Residues 28–57 (APAIVRANQKDSYFETVLRDKLQNVIQIFK) traverse the membrane as a helical segment. Residue Gly-58 is a topological domain, cytoplasmic. A helical transmembrane segment spans residues 59–80 (QRFTHTHPEEIGVAAKALYLSL). Over 81 to 108 (TTLLGTKTLGEEYVDLIYVSRDGKRIPR) the chain is Peroxisomal matrix. Residues 109-141 (YLARAGFIFAYAILPYFLTRLFRRLKSSSTPKD) form a helical membrane-spanning segment. At 142 to 158 (EVTEEKINKELPISLRI) the chain is on the cytoplasmic side. Residues 159–185 (EKYLSNMSYSKVLDTIMNLHIAVFYFS) form a helical membrane-spanning segment. The Peroxisomal matrix portion of the chain corresponds to 186-215 (GQFYNISKRFFSMRYAFGHKINKERTPNGN). Residues 216–235 (YELLGGLIVLQLVMKSLGGF) traverse the membrane as a helical segment. Over 236 to 419 (KGLIGSFTGN…RTLGYFLVVF (184 aa)) the chain is Cytoplasmic. Residues Cys-298, Cys-301, Cys-313, His-315, Cys-318, Cys-321, Cys-334, and Cys-347 each coordinate Zn(2+). An RING-type zinc finger spans residues 298–360 (CMLCLSYMTN…FYIPTLNKIC (63 aa)).

Belongs to the pex2/pex10/pex12 family. In terms of assembly, component of the peroxisomal translocation complex, composed of at least PEX3, PEX2, PEX10 and PEX12. Interacts with PEX19.

The protein localises to the peroxisome membrane. It carries out the reaction S-ubiquitinyl-[E2 ubiquitin-conjugating enzyme]-L-cysteine + [acceptor protein]-L-lysine = [E2 ubiquitin-conjugating enzyme]-L-cysteine + N(6)-ubiquitinyl-[acceptor protein]-L-lysine.. Its pathway is protein modification; protein ubiquitination. With respect to regulation, the E3 ubiquitin-protein ligase activity is stimulated by PEX12. Functionally, E3 ubiquitin-protein ligase component of the peroxisomal translocation complex. The two types of peroxisomal matrix targeting signals, PTS1 and PTS2, are first recognized in the cytosol by their receptors PEX5 and PEX7, respectively, which then carry the cargo to the peroxisomal membrane. The peroxisomal targeting signal (PTS) receptor-cargo complexes interact with peroxisomal membrane protein (PMP) components of the docking complex. They have then additional downstream interactions with the translocation complex, leading to the transport of fully folded and oligomerized cargo into the peroxisome matrix. The peroxisomal translocation complex forms the retrotranslocation channel with each subunit contributing transmembrane segments that coassemble into an open channel that specifically allows the passage of PEX5 and PEX20 through the peroxisomal membrane. Specifically catalyzes monoubiquitination of PEX5 and/or PEX20 at 'Cys-6' and 'Cys-8', respectively, a modification that acts as a signal for PEX5 or PEX20 export from peroxisomes to the cytosol, thereby promoting PEX5 and PEX20 recycling. This is Peroxisome biogenesis factor 10 from Komagataella pastoris (Yeast).